The primary structure comprises 178 residues: Peptide methionine sulfoxide reductase MsrA (178 aa).

Cys14 is a catalytic residue.

The protein belongs to the MsrA Met sulfoxide reductase family.

It carries out the reaction L-methionyl-[protein] + [thioredoxin]-disulfide + H2O = L-methionyl-(S)-S-oxide-[protein] + [thioredoxin]-dithiol. The catalysed reaction is [thioredoxin]-disulfide + L-methionine + H2O = L-methionine (S)-S-oxide + [thioredoxin]-dithiol. Functionally, has an important function as a repair enzyme for proteins that have been inactivated by oxidation. Catalyzes the reversible oxidation-reduction of methionine sulfoxide in proteins to methionine. The protein is Peptide methionine sulfoxide reductase MsrA of Bacillus pumilus (strain SAFR-032).